We begin with the raw amino-acid sequence, 172 residues long: Large ribosomal subunit protein bL17 (172 aa).

A disordered region spans residues 153 to 172; sequence AQAAEPVAAAEPATPATTAG.

This sequence belongs to the bacterial ribosomal protein bL17 family. Part of the 50S ribosomal subunit. Contacts protein L32.

This is Large ribosomal subunit protein bL17 from Sorangium cellulosum (strain So ce56) (Polyangium cellulosum (strain So ce56)).